A 441-amino-acid chain; its full sequence is Protein C-ets-1 (441 aa).

N6-acetyllysine; alternate occurs at positions 8 and 15. Glycyl lysine isopeptide (Lys-Gly) (interchain with G-Cter in SUMO2); alternate cross-links involve residues K8 and K15. K15 participates in a covalent cross-link: Glycyl lysine isopeptide (Lys-Gly) (interchain with G-Cter in SUMO); alternate. Position 38 is a phosphothreonine; by MAPK (T38). One can recognise a PNT domain in the interval 51-136 (ATFSGFTKEQ…EHLEILQKED (86 aa)). Residues 130 to 243 (EILQKEDVKP…DNMCMGRASR (114 aa)) form an activation domain; required for transcription activation region. K138 participates in a covalent cross-link: Glycyl lysine isopeptide (Lys-Gly) (interchain with G-Cter in SUMO2). A Phosphotyrosine modification is found at Y223. K227 participates in a covalent cross-link: Glycyl lysine isopeptide (Lys-Gly) (interchain with G-Cter in SUMO). Phosphoserine occurs at positions 251 and 254. Residue T265 is modified to Phosphothreonine. S267, S270, S282, and S285 each carry phosphoserine. The segment at 304 to 312 (FKDYVRDRA) is helix HI-1. Position 305 is an N6-acetyllysine (K305). The helix HI-2 stretch occupies residues 323 to 330 (AAALAGYT). Residues 335 to 415 (IQLWQFLLEL…AGKRYVYRFV (81 aa)) constitute a DNA-binding region (ETS). Positions 418 to 422 (LQSLL) are helix H4. The segment at 426–432 (PEELHAM) is helix H5.

Belongs to the ETS family. Binds DNA as a homodimer; homodimerization is required for transcription activation. Interacts with MAF and MAFB. Interacts with PAX5; the interaction alters DNA-binding properties. Interacts with DAXX. Interacts with UBE2I. Interacts with SP100; the interaction is direct and modulates ETS1 transcriptional activity. Post-translationally, sumoylated on Lys-15 and Lys-227, preferentially with SUMO2; which inhibits transcriptional activity. In terms of processing, ubiquitinated; which induces proteasomal degradation. Phosphorylation at Ser-251, Ser-282 and Ser-285 by CaMK2/CaMKII in response to calcium signaling decreases affinity for DNA: an increasing number of phosphoserines causes DNA-binding to become progressively weaker.

The protein resides in the nucleus. The protein localises to the cytoplasm. With respect to regulation, autoinhibited by a module composed of four alpha helices (HI-1, HI-2, H4, and H5) that flank the DNA-binding ETS domain, reducing the affinity for DNA. Phosphorylation by CaMK2/CaMKII in response to calcium signaling decreases affinity for DNA. Functionally, transcription factor. Directly controls the expression of cytokine and chemokine genes in a wide variety of different cellular contexts. May control the differentiation, survival and proliferation of lymphoid cells. May also regulate angiogenesis through regulation of expression of genes controlling endothelial cell migration and invasion. This chain is Protein C-ets-1 (Ets1), found in Rattus norvegicus (Rat).